We begin with the raw amino-acid sequence, 270 residues long: 4-hydroxy-tetrahydrodipicolinate reductase (270 aa).

NAD(+) is bound by residues 9–14 (GAGGRM) and Glu-35. Arg-36 is an NADP(+) binding site. Residues 99 to 101 (GTT) and 123 to 126 (ASNY) contribute to the NAD(+) site. His-156 serves as the catalytic Proton donor/acceptor. His-157 provides a ligand contact to (S)-2,3,4,5-tetrahydrodipicolinate. The Proton donor role is filled by Lys-160. A (S)-2,3,4,5-tetrahydrodipicolinate-binding site is contributed by 166–167 (GT).

The protein belongs to the DapB family.

The protein localises to the cytoplasm. The catalysed reaction is (S)-2,3,4,5-tetrahydrodipicolinate + NAD(+) + H2O = (2S,4S)-4-hydroxy-2,3,4,5-tetrahydrodipicolinate + NADH + H(+). It catalyses the reaction (S)-2,3,4,5-tetrahydrodipicolinate + NADP(+) + H2O = (2S,4S)-4-hydroxy-2,3,4,5-tetrahydrodipicolinate + NADPH + H(+). Its pathway is amino-acid biosynthesis; L-lysine biosynthesis via DAP pathway; (S)-tetrahydrodipicolinate from L-aspartate: step 4/4. In terms of biological role, catalyzes the conversion of 4-hydroxy-tetrahydrodipicolinate (HTPA) to tetrahydrodipicolinate. In Mannheimia succiniciproducens (strain KCTC 0769BP / MBEL55E), this protein is 4-hydroxy-tetrahydrodipicolinate reductase.